We begin with the raw amino-acid sequence, 955 residues long: MIMNQEYIKVRGAKEHNLKNINVNIPRNKFVVITGLSGSGKSSLAFDTIYAEGQRRYVESLSSYARQFLHLQNKPNVESISGLSPAIAIDQKTTSKNPRSTVGTITEIYDYLRLLYARVGIPYSPATGLPIHSQTVSEMVDIINELPKGTKIYLLAPIVRGHKGEFKREIMDLKKQGFQKLIVNGEVCEIDDLPKLDKNKKHNIEVIVDRIVLDESLGNRLADSLESSLNLAEGITYLEIVELPPAVKSEFEKNQRITFSEQYSCPVSGFQLTEIEPRIFSFNSPFGACPKCEGIGKEFFFDRDLIVPDQRIAIKDGAIVPWGSTASKFILETLKALADHYKFSIEVPFVSLSQNVKDILFEGSGEEAIKFEFHDGSKTQIIKQPFAGIIPSLQEKDRTIESVLIKEELAKFKSEHKCTACSGFRLKDEALCVKIANLHIGEVAGMSIAALQKWFSHLEEKLNKKQLFIAERILKEITERLKFLMNVGLDYLTLSREAGTLSGGESQRIRLASQIGSGLSGVLYVLDEPSIGLHQRDNTRLIETLKRLRDLGNTVLVVEHDEETIYEADHIIDIGPGAGIHGGRVIAEGNVEEIKNFEESITGRYLSGRQTIKVPSETRVGHDNRAIELLGAVSNNLDNVDIKIPLGTFTAITGVSGSGKSSLMIHTLYKAALKHLEPTSKVFPGKYRELKGLEYIDKIIDINQSPIGRTPRSNPATYTGAFTHIRDWFVELPESKARGYKVGRFSFNVKGGRCEACQGDGLIKIEMHFLPDVYVKCDICNGHRYNRETLEIKYKGKSIADILMMTVEDAMQFFEKIPLIYEKLITLNEVGLGYIKIGQSATTLSGGEAQRVKLAKELSRRSTGKTLYILDEPTTGLHIDDINKLLKVLHKLVDMGNTVLVIEHNLDVIKTADYIIDVGPEGGDKGGKIVVCGTPADIAACEESHTGRYLKQYLV.

35 to 42 is an ATP binding site; the sequence is GLSGSGKS. ABC transporter domains lie at 322 to 601 and 621 to 951; these read WGST…EESI and GHDN…RYLK. 654–661 lines the ATP pocket; the sequence is GVSGSGKS. The C4-type zinc finger occupies 754–780; it reads CEACQGDGLIKIEMHFLPDVYVKCDIC.

Belongs to the ABC transporter superfamily. UvrA family. In terms of assembly, forms a heterotetramer with UvrB during the search for lesions.

The protein localises to the cytoplasm. Its function is as follows. The UvrABC repair system catalyzes the recognition and processing of DNA lesions. UvrA is an ATPase and a DNA-binding protein. A damage recognition complex composed of 2 UvrA and 2 UvrB subunits scans DNA for abnormalities. When the presence of a lesion has been verified by UvrB, the UvrA molecules dissociate. The sequence is that of UvrABC system protein A from Rickettsia conorii (strain ATCC VR-613 / Malish 7).